We begin with the raw amino-acid sequence, 518 residues long: Putative cysteine ligase BshC (518 aa).

A coiled-coil region spans residues 404-474 (AAASAERLAA…RARQLTRLKR (71 aa)).

Belongs to the BshC family.

The protein is Putative cysteine ligase BshC of Deinococcus geothermalis (strain DSM 11300 / CIP 105573 / AG-3a).